A 517-amino-acid polypeptide reads, in one-letter code: Ubiquitin carboxyl-terminal hydrolase 30 (517 aa).

Residues 1–35 lie on the Mitochondrial intermembrane side of the membrane; it reads MLSSRAQAARTAADKALQRFLRTGAAVRYKVMKNW. Residues 36–56 traverse the membrane as a helical segment; that stretch reads GVIGGIAAALAAGIYVIWGPI. At 57-517 the chain is on the cytoplasmic side; it reads TERKKRRKGL…QQGREYRSEE (461 aa). The USP domain occupies 68–502; it reads PGLVNLGNTC…SAYLLFYERV (435 aa). Catalysis depends on cysteine 77, which acts as the Nucleophile. Residues 198 to 221 form a disordered region; that stretch reads MAPRQVTCHTRGSPHPTTNHWKSQ. The segment covering 204–218 has biased composition (polar residues); it reads TCHTRGSPHPTTNHW. Residues lysine 235 and lysine 289 each participate in a glycyl lysine isopeptide (Lys-Gly) (interchain with G-Cter in ubiquitin) cross-link. The tract at residues 364–395 is disordered; the sequence is SQHGPKATENPGSAPEVQDAQAAPKPGLSQPG. The Proton acceptor role is filled by histidine 452.

This sequence belongs to the peptidase C19 family. Post-translationally, ubiquitinated by parkin (PRKN) at Lys-235 and Lys-289, leading to its degradation.

It is found in the mitochondrion outer membrane. It carries out the reaction Thiol-dependent hydrolysis of ester, thioester, amide, peptide and isopeptide bonds formed by the C-terminal Gly of ubiquitin (a 76-residue protein attached to proteins as an intracellular targeting signal).. With respect to regulation, inhibited by the diterpenoid derivative 15-oxospiramilactone (S3). Functionally, deubiquitinating enzyme tethered to the mitochondrial outer membrane that acts as a key inhibitor of mitophagy by counteracting the action of parkin (PRKN): hydrolyzes ubiquitin attached by parkin on target proteins, such as RHOT1/MIRO1 and TOMM20, thereby blocking parkin's ability to drive mitophagy. Preferentially cleaves 'Lys-6'- and 'Lys-11'-linked polyubiquitin chains, 2 types of linkage that participate in mitophagic signaling. Does not cleave efficiently polyubiquitin phosphorylated at 'Ser-65'. Acts as negative regulator of mitochondrial fusion by mediating deubiquitination of MFN1 and MFN2. In Mus musculus (Mouse), this protein is Ubiquitin carboxyl-terminal hydrolase 30 (Usp30).